The sequence spans 216 residues: Ribonuclease T (216 aa).

One can recognise an Exonuclease domain in the interval 28–202 (VVVDVETGGF…YDTEQTARLF (175 aa)). Mg(2+)-binding residues include Asp-31, Glu-33, His-189, and Asp-194. His-189 functions as the Proton donor/acceptor in the catalytic mechanism.

The protein belongs to the RNase T family. Homodimer. Mg(2+) serves as cofactor.

Trims short 3' overhangs of a variety of RNA species, leaving a one or two nucleotide 3' overhang. Responsible for the end-turnover of tRNA: specifically removes the terminal AMP residue from uncharged tRNA (tRNA-C-C-A). Also appears to be involved in tRNA biosynthesis. This Xanthomonas campestris pv. campestris (strain 8004) protein is Ribonuclease T.